A 2567-amino-acid polypeptide reads, in one-letter code: Unconventional myosin-XVIIIb (2567 aa).

Residues 41 to 508 (LVRGTEKEAK…SRDSDQAPED (468 aa)) form a disordered region. Residues 44–54 (GTEKEAKEARQ) are compositionally biased toward basic and acidic residues. The segment covering 71-104 (SISQPNSKSSSGTRSGSQQISQDDQSSSPGSSDI) has biased composition (low complexity). Composition is skewed to basic and acidic residues over residues 105–116 (LGKESEGSRSPD) and 160–176 (LDPD…HDAP). Polar residues predominate over residues 196-206 (SRTPCGSQAST). Composition is skewed to basic and acidic residues over residues 251 to 265 (TELK…DRQG), 278 to 287 (RPGKAEKEGA), and 326 to 349 (SKWD…EKTG). Over residues 350–362 (EPQTQMEKTSQVQ) the composition is skewed to polar residues. Basic and acidic residues-rich tracts occupy residues 367-377 (DDLRMGEKAGE), 410-420 (SQTEKGCEAPK), 471-485 (LEKD…KENQ), and 492-508 (EEGK…APED). The Myosin motor domain maps to 571–1333 (DQVEDLASLI…VISRLEKQRE (763 aa)). 660-667 (GWSGAGKT) provides a ligand contact to ATP. The segment at 1208 to 1232 (VESRSGQESPPPPQPGRDKPGAGGP) is disordered. The tract at residues 1213 to 1240 (GQESPPPPQPGRDKPGAGGPLALDIPAL) is GPA. At Ser-1216 the chain carries Phosphoserine. In terms of domain architecture, IQ spans 1336–1365 (VSQSIVLFQAACKGFLSRQEFKKLKIRRLA). Coiled-coil stretches lie at residues 1396-1783 (SATI…GLIG), 1825-1961 (KTSV…STVD), and 2014-2090 (ESQQ…VASS). Positions 1426–2083 (NELRQNTDLL…IRRIADLQAA (658 aa)) are tail. Ser-1829 carries the phosphoserine modification. Residues 2139–2153 (TMRTPSRQSATSSRI) show a composition bias toward polar residues. Disordered regions lie at residues 2139 to 2194 (TMRT…PVSP) and 2217 to 2249 (STER…PSAA). A compositionally biased stretch (basic and acidic residues) spans 2158 to 2167 (INEEAGDTER). The span at 2168–2185 (TQSALALSRARSTNVHSK) shows a compositional bias: polar residues. Ser-2193 carries the phosphoserine modification. Residues 2227–2238 (PLASRSTNTSPL) show a composition bias toward polar residues. 2 positions are modified to phosphoserine: Ser-2296 and Ser-2309. The interval 2357-2376 (SRPSMGRKLSSPTTPRDMLL) is disordered. Ser-2377 is modified (phosphoserine). Disordered regions lie at residues 2444–2471 (FLPA…SQRS) and 2494–2567 (KSPE…YLQK). Positions 2494–2504 (KSPEPKEDPAH) are enriched in basic and acidic residues. Over residues 2506–2520 (SDSSSSSGSIVSFKS) the composition is skewed to low complexity. Residues 2537 to 2556 (GGERTSPERREPGTGRKDDD) are compositionally biased toward basic and acidic residues.

It belongs to the TRAFAC class myosin-kinesin ATPase superfamily. Myosin family. In terms of assembly, homodimer. May interact with F actin through the GPA motif (Gly/Pro/Ala-rich). As to expression, selectively expressed in cardiac and skeletal muscles. Weakly expressed in testis, pancreas, placenta, prostate, lung and thymus.

It is found in the cytoplasm. It localises to the nucleus. Its subcellular location is the myofibril. The protein localises to the sarcomere. Functionally, may be involved in intracellular trafficking of the muscle cell when in the cytoplasm, whereas entering the nucleus, may be involved in the regulation of muscle specific genes. May play a role in the control of tumor development and progression; restored MYO18B expression in lung cancer cells suppresses anchorage-independent growth. This Homo sapiens (Human) protein is Unconventional myosin-XVIIIb (MYO18B).